The following is a 147-amino-acid chain: Methylglyoxal synthase (147 aa).

The region spanning Val-4–Ser-147 is the MGS-like domain. Residues His-17, Lys-21, Thr-43–Thr-46, and Ser-63–Gly-64 each bind substrate. Asp-69 serves as the catalytic Proton donor/acceptor. A substrate-binding site is contributed by His-96.

This sequence belongs to the methylglyoxal synthase family.

The catalysed reaction is dihydroxyacetone phosphate = methylglyoxal + phosphate. Its function is as follows. Catalyzes the formation of methylglyoxal from dihydroxyacetone phosphate. The polypeptide is Methylglyoxal synthase (Leptospira borgpetersenii serovar Hardjo-bovis (strain JB197)).